The following is a 146-amino-acid chain: Hemoglobin subunit beta-1 (146 aa).

Positions 2–146 constitute a Globin domain; it reads HWTAEEKQLI…VAHALARRYH (145 aa). 2 residues coordinate heme b: His63 and His92.

This sequence belongs to the globin family. In terms of assembly, heterotetramer of two alpha chains and two beta chains. As to expression, red blood cells.

Involved in oxygen transport from the lung to the various peripheral tissues. The polypeptide is Hemoglobin subunit beta-1 (HBB1) (Iguana iguana (Common iguana)).